The primary structure comprises 284 residues: 2-dehydro-3-deoxyphosphooctonate aldolase (284 aa).

It belongs to the KdsA family.

The protein localises to the cytoplasm. The enzyme catalyses D-arabinose 5-phosphate + phosphoenolpyruvate + H2O = 3-deoxy-alpha-D-manno-2-octulosonate-8-phosphate + phosphate. It participates in carbohydrate biosynthesis; 3-deoxy-D-manno-octulosonate biosynthesis; 3-deoxy-D-manno-octulosonate from D-ribulose 5-phosphate: step 2/3. The protein operates within bacterial outer membrane biogenesis; lipopolysaccharide biosynthesis. This Pseudoalteromonas translucida (strain TAC 125) protein is 2-dehydro-3-deoxyphosphooctonate aldolase.